The chain runs to 427 residues: D-inositol 3-phosphate glycosyltransferase (427 aa).

H12 lines the 1D-myo-inositol 3-phosphate pocket. Residues 18 to 19 (QP) and G26 contribute to the UDP-N-acetyl-alpha-D-glucosamine site. Residues 23–28 (DAGGMN), K81, Y113, T137, and R157 each bind 1D-myo-inositol 3-phosphate. 3 residues coordinate UDP-N-acetyl-alpha-D-glucosamine: R234, K239, and R297. 3 residues coordinate Mg(2+): Y306, Q307, and A309. E319 and E327 together coordinate UDP-N-acetyl-alpha-D-glucosamine. T333 provides a ligand contact to Mg(2+).

It belongs to the glycosyltransferase group 1 family. MshA subfamily. Homodimer.

It catalyses the reaction 1D-myo-inositol 3-phosphate + UDP-N-acetyl-alpha-D-glucosamine = 1D-myo-inositol 2-acetamido-2-deoxy-alpha-D-glucopyranoside 3-phosphate + UDP + H(+). Catalyzes the transfer of a N-acetyl-glucosamine moiety to 1D-myo-inositol 3-phosphate to produce 1D-myo-inositol 2-acetamido-2-deoxy-glucopyranoside 3-phosphate in the mycothiol biosynthesis pathway. The protein is D-inositol 3-phosphate glycosyltransferase of Corynebacterium diphtheriae (strain ATCC 700971 / NCTC 13129 / Biotype gravis).